The primary structure comprises 279 residues: Fatty acid metabolism regulator protein (279 aa).

An HTH gntR-type domain is found at 6–74 (KSPAGFAEKY…HGKPTKVNQF (69 aa)). The segment at residues 34–53 (ERELSELIGVTRTTLREVLQ) is a DNA-binding region (H-T-H motif).

In terms of assembly, homodimer.

The protein resides in the cytoplasm. Multifunctional regulator of fatty acid metabolism. The protein is Fatty acid metabolism regulator protein of Vibrio vulnificus (strain CMCP6).